The chain runs to 1910 residues: C2 domain-containing protein (1910 aa).

Over residues 1-28 (MMKLKEMVEAAEAKVESKPPQAAEEKAP) the composition is skewed to basic and acidic residues. Disordered regions lie at residues 1–54 (MMKL…EPLD), 355–377 (AMKL…PEDG), and 398–428 (LEEL…DGPQ). Over residues 414–423 (KGEDKKDGNK) the composition is skewed to basic and acidic residues. One can recognise a C2 domain in the interval 557–678 (QLGEVSESDS…FFNEKHNKRN (122 aa)). Basic and acidic residues-rich tracts occupy residues 1192–1205 (LAQK…DAQR) and 1215–1228 (GHEG…DKQG). Disordered stretches follow at residues 1192-1267 (LAQK…VKKG), 1405-1424 (ATAG…RDMQ), 1431-1654 (LEEA…SMGA), 1666-1747 (QRKH…FLSS), 1822-1841 (AKEE…DWSD), and 1879-1910 (DACS…AGRT). Low complexity-rich tracts occupy residues 1239–1257 (AAAA…VQGA) and 1405–1414 (ATAGEGEQQT). A compositionally biased stretch (basic residues) spans 1440 to 1469 (KKKKKKEKKEKKEKKEKKEKKEKKEKKKKK). Positions 1492 to 1502 (PAAAIPSVLLP) are enriched in low complexity. The segment covering 1517–1526 (KKEKKEKKKK) has biased composition (basic residues). The segment covering 1550 to 1561 (PAAAIPSILLPA) has biased composition (low complexity). The segment covering 1569–1584 (EKPKEKKTEKKKEKHT) has biased composition (basic and acidic residues). A compositionally biased stretch (polar residues) spans 1595 to 1604 (LPESETTAVV). Low complexity-rich tracts occupy residues 1620–1629 (VPSSIASSEA) and 1675–1698 (SSSS…SSSS). Residues 1701-1711 (AETRAKADALR) are compositionally biased toward basic and acidic residues. Low complexity-rich tracts occupy residues 1712 to 1722 (ARLQAAQARLA) and 1729 to 1747 (VSSS…FLSS). Positions 1766–1828 (QQRLQKMVSG…TRRAKEEKDL (63 aa)) form a coiled coil. The span at 1890–1904 (ESRTTAGAKLRQQQL) shows a compositional bias: polar residues.

Its subcellular location is the membrane. Functionally, regulates microneme secretion. Probably involved in regulation of rhoptry and dense granule secretion. This Toxoplasma gondii protein is C2 domain-containing protein.